Here is a 318-residue protein sequence, read N- to C-terminus: Elongator complex protein 5 (318 aa).

Ser-270 carries the phosphoserine modification.

The protein belongs to the ELP5 family. As to quaternary structure, component of the elongator complex which consists of ELP1, ELP2, ELP3, ELP4, ELP5 and ELP6; in the complex, is required for optimal binding of ELP3 to ELP4. Post-translationally, tyrosine-phosphorylated.

Its subcellular location is the nucleus. The protein localises to the cytoplasm. The protein operates within tRNA modification; 5-methoxycarbonylmethyl-2-thiouridine-tRNA biosynthesis. In terms of biological role, component of the elongator complex which is required for multiple tRNA modifications, including mcm5U (5-methoxycarbonylmethyl uridine), mcm5s2U (5-methoxycarbonylmethyl-2-thiouridine), and ncm5U (5-carbamoylmethyl uridine). The elongator complex catalyzes the formation of carboxymethyluridine in the wobble base at position 34 in tRNAs. Involved in cell migration. This Rattus norvegicus (Rat) protein is Elongator complex protein 5 (Elp5).